The sequence spans 350 residues: DNA-directed RNA polymerase subunit alpha (350 aa).

An alpha N-terminal domain (alpha-NTD) region spans residues 1 to 226 (MLISQRPTLS…ELFGLARELN (226 aa)). Residues 241–350 (ADHIASFALP…NQDYAETEQL (110 aa)) are alpha C-terminal domain (alpha-CTD). Residues 328 to 350 (GTWTSDAGYDLDDNQDYAETEQL) are disordered. Residues 336–350 (YDLDDNQDYAETEQL) show a composition bias toward acidic residues.

Belongs to the RNA polymerase alpha chain family. As to quaternary structure, homodimer. The RNAP catalytic core consists of 2 alpha, 1 beta, 1 beta' and 1 omega subunit. When a sigma factor is associated with the core the holoenzyme is formed, which can initiate transcription.

The enzyme catalyses RNA(n) + a ribonucleoside 5'-triphosphate = RNA(n+1) + diphosphate. DNA-dependent RNA polymerase catalyzes the transcription of DNA into RNA using the four ribonucleoside triphosphates as substrates. The protein is DNA-directed RNA polymerase subunit alpha of Mycolicibacterium smegmatis (strain ATCC 700084 / mc(2)155) (Mycobacterium smegmatis).